The chain runs to 317 residues: Putative 2-hydroxyacid dehydrogenase SAB2178 (317 aa).

Residues E155–I156, A234–R236, and D260 contribute to the NAD(+) site. R236 is an active-site residue. E265 is an active-site residue. The active-site Proton donor is H283. Residue H283 to N286 participates in NAD(+) binding.

The protein belongs to the D-isomer specific 2-hydroxyacid dehydrogenase family.

The chain is Putative 2-hydroxyacid dehydrogenase SAB2178 from Staphylococcus aureus (strain bovine RF122 / ET3-1).